Reading from the N-terminus, the 506-residue chain is Tyrosine-protein kinase FRK (506 aa).

The region spanning 43–111 (SQGQYFVALF…PSNYVAEDRS (69 aa)) is the SH3 domain. Residues 117–209 (WFFGAIKRAD…GLCVKLEKPC (93 aa)) form the SH2 domain. At T179 the chain carries Phosphothreonine. A Protein kinase domain is found at 235 to 492 (IQLLKRLGSG…TLHWKLEDYF (258 aa)). Residues 241–249 (LGSGQFGEV) and K263 each bind ATP. The Proton acceptor role is filled by D355. Y388 is modified (phosphotyrosine; by autocatalysis).

Belongs to the protein kinase superfamily. Tyr protein kinase family. SRC subfamily. As to quaternary structure, interacts (via the SH3-domain) with PTEN. Interacts with RB1. Highly expressed in stomach, small intestine and colon. Concentrated in the brush border membranes of epithelial cells, throughout the maturation axis of the adult small intestine.

It localises to the cytoplasm. The protein resides in the nucleus. It catalyses the reaction L-tyrosyl-[protein] + ATP = O-phospho-L-tyrosyl-[protein] + ADP + H(+). Functionally, non-receptor tyrosine-protein kinase that negatively regulates cell proliferation. Positively regulates PTEN protein stability through phosphorylation of PTEN on 'Tyr-336', which in turn prevents its ubiquitination and degradation, possibly by reducing its binding to NEDD4. May function as a tumor suppressor. The sequence is that of Tyrosine-protein kinase FRK (Frk) from Rattus norvegicus (Rat).